The chain runs to 284 residues: Urease accessory protein UreD (284 aa).

This sequence belongs to the UreD family. As to quaternary structure, ureD, UreF and UreG form a complex that acts as a GTP-hydrolysis-dependent molecular chaperone, activating the urease apoprotein by helping to assemble the nickel containing metallocenter of UreC. The UreE protein probably delivers the nickel.

It is found in the cytoplasm. Its function is as follows. Required for maturation of urease via the functional incorporation of the urease nickel metallocenter. This Bordetella bronchiseptica (strain ATCC BAA-588 / NCTC 13252 / RB50) (Alcaligenes bronchisepticus) protein is Urease accessory protein UreD.